The primary structure comprises 154 residues: NADPH-dependent 7-cyano-7-deazaguanine reductase (154 aa).

The active-site Thioimide intermediate is cysteine 52. Aspartate 59 acts as the Proton donor in catalysis. Substrate-binding positions include 74–76 (VES) and 93–94 (HE).

This sequence belongs to the GTP cyclohydrolase I family. QueF type 1 subfamily.

The protein resides in the cytoplasm. The catalysed reaction is 7-aminomethyl-7-carbaguanine + 2 NADP(+) = 7-cyano-7-deazaguanine + 2 NADPH + 3 H(+). The protein operates within tRNA modification; tRNA-queuosine biosynthesis. Functionally, catalyzes the NADPH-dependent reduction of 7-cyano-7-deazaguanine (preQ0) to 7-aminomethyl-7-deazaguanine (preQ1). This is NADPH-dependent 7-cyano-7-deazaguanine reductase from Sinorhizobium medicae (strain WSM419) (Ensifer medicae).